A 504-amino-acid polypeptide reads, in one-letter code: ATP synthase subunit alpha 1 (504 aa).

172–179 (GDRQTGKT) contributes to the ATP binding site.

The protein belongs to the ATPase alpha/beta chains family. In terms of assembly, F-type ATPases have 2 components, CF(1) - the catalytic core - and CF(0) - the membrane proton channel. CF(1) has five subunits: alpha(3), beta(3), gamma(1), delta(1), epsilon(1). CF(0) has three main subunits: a(1), b(2) and c(9-12). The alpha and beta chains form an alternating ring which encloses part of the gamma chain. CF(1) is attached to CF(0) by a central stalk formed by the gamma and epsilon chains, while a peripheral stalk is formed by the delta and b chains.

It is found in the cell inner membrane. It carries out the reaction ATP + H2O + 4 H(+)(in) = ADP + phosphate + 5 H(+)(out). In terms of biological role, produces ATP from ADP in the presence of a proton gradient across the membrane. The alpha chain is a regulatory subunit. This Rhodopirellula baltica (strain DSM 10527 / NCIMB 13988 / SH1) protein is ATP synthase subunit alpha 1.